The primary structure comprises 132 residues: Large ribosomal subunit protein uL14 (132 aa).

The protein belongs to the universal ribosomal protein uL14 family. In terms of assembly, part of the 50S ribosomal subunit. Forms a cluster with proteins L3 and L24e, part of which may contact the 16S rRNA in 2 intersubunit bridges.

Functionally, binds to 23S rRNA. Forms part of two intersubunit bridges in the 70S ribosome. In Methanosarcina mazei (strain ATCC BAA-159 / DSM 3647 / Goe1 / Go1 / JCM 11833 / OCM 88) (Methanosarcina frisia), this protein is Large ribosomal subunit protein uL14.